The following is a 489-amino-acid chain: Ketol-acid reductoisomerase (NADP(+)) (489 aa).

The KARI N-terminal Rossmann domain occupies 17 to 208 (LGVCEFMEQS…GGHKAGVLRS (192 aa)). NADP(+) is bound by residues 45–48 (CGAQ), Arg68, Arg76, Ser78, and 108–110 (DKQ). His132 is a catalytic residue. An NADP(+)-binding site is contributed by Gly158. KARI C-terminal knotted domains are found at residues 209 to 344 (SFVA…KTAP) and 345 to 485 (QEAP…MTAM). 4 residues coordinate Mg(2+): Asp217, Glu221, Glu389, and Glu393. Substrate is bound at residue Ser414.

It belongs to the ketol-acid reductoisomerase family. Mg(2+) is required as a cofactor.

The catalysed reaction is (2R)-2,3-dihydroxy-3-methylbutanoate + NADP(+) = (2S)-2-acetolactate + NADPH + H(+). It carries out the reaction (2R,3R)-2,3-dihydroxy-3-methylpentanoate + NADP(+) = (S)-2-ethyl-2-hydroxy-3-oxobutanoate + NADPH + H(+). Its pathway is amino-acid biosynthesis; L-isoleucine biosynthesis; L-isoleucine from 2-oxobutanoate: step 2/4. It functions in the pathway amino-acid biosynthesis; L-valine biosynthesis; L-valine from pyruvate: step 2/4. Its function is as follows. Involved in the biosynthesis of branched-chain amino acids (BCAA). Catalyzes an alkyl-migration followed by a ketol-acid reduction of (S)-2-acetolactate (S2AL) to yield (R)-2,3-dihydroxy-isovalerate. In the isomerase reaction, S2AL is rearranged via a Mg-dependent methyl migration to produce 3-hydroxy-3-methyl-2-ketobutyrate (HMKB). In the reductase reaction, this 2-ketoacid undergoes a metal-dependent reduction by NADPH to yield (R)-2,3-dihydroxy-isovalerate. The protein is Ketol-acid reductoisomerase (NADP(+)) of Flavobacterium johnsoniae (strain ATCC 17061 / DSM 2064 / JCM 8514 / BCRC 14874 / CCUG 350202 / NBRC 14942 / NCIMB 11054 / UW101) (Cytophaga johnsonae).